Reading from the N-terminus, the 310-residue chain is B3 domain-containing transcription factor NGA1 (310 aa).

A disordered region spans residues 1 to 26 (MMTDLSLTRDEDEEEAKPLAEEEGAR). Over residues 16–26 (AKPLAEEEGAR) the composition is skewed to basic and acidic residues. Positions 35–141 (FDKVVTPSDV…RLFIDWRRRP (107 aa)) form a DNA-binding region, TF-B3. Residues 251-268 (ESGMTNSTEEESSSSGGS) are compositionally biased toward low complexity. Residues 251–310 (ESGMTNSTEEESSSSGGSLPRGGGGGASSSSFFQLRLGSSSEDDHFTKKGKSSLSFDLDQ) form a disordered region.

Interacts with BRX. Interacts with BZIP30.

It localises to the nucleus. Regulates lateral organ growth. Functionally redundant with NGA2, NGA3 and NGA4. The sequence is that of B3 domain-containing transcription factor NGA1 (NGA1) from Arabidopsis thaliana (Mouse-ear cress).